Consider the following 1199-residue polypeptide: Nucleolar protein 6 (1199 aa).

The segment covering 1-10 has biased composition (basic residues); it reads MLRNKRKAGK. 2 disordered regions span residues 1–51 and 1146–1199; these read MLRN…EPKP and KREQ…KALK. Basic and acidic residues-rich tracts occupy residues 28–37 and 1146–1169; these read HAEDHSDLEH and KREQ…EKST.

Belongs to the NRAP family. In terms of assembly, part of the small subunit (SSU) processome, composed of more than 70 proteins and the RNA chaperone small nucleolar RNA (snoRNA) U3.

It localises to the nucleus. It is found in the nucleolus. Its subcellular location is the chromosome. Functionally, part of the small subunit (SSU) processome, first precursor of the small eukaryotic ribosomal subunit. During the assembly of the SSU processome in the nucleolus, many ribosome biogenesis factors, an RNA chaperone and ribosomal proteins associate with the nascent pre-rRNA and work in concert to generate RNA folding, modifications, rearrangements and cleavage as well as targeted degradation of pre-ribosomal RNA by the RNA exosome. This chain is Nucleolar protein 6, found in Drosophila yakuba (Fruit fly).